Here is a 337-residue protein sequence, read N- to C-terminus: Ribosomal RNA small subunit methyltransferase C (337 aa).

It belongs to the methyltransferase superfamily. RsmC family. Monomer.

It is found in the cytoplasm. It carries out the reaction guanosine(1207) in 16S rRNA + S-adenosyl-L-methionine = N(2)-methylguanosine(1207) in 16S rRNA + S-adenosyl-L-homocysteine + H(+). Functionally, specifically methylates the guanine in position 1207 of 16S rRNA in the 30S particle. This is Ribosomal RNA small subunit methyltransferase C from Acinetobacter baumannii (strain ACICU).